The primary structure comprises 53 residues: Membrane antigen containing repeating peptides (53 aa).

6 tandem repeats follow at residues 1–10, 11–20, 21–30, 31–40, 41–50, and 51–53. A 6 X 10 AA tandem repeats region spans residues 1–53; sequence EAEEAARLQAEAEEAARQQAEAEEAARLQAEAEEAARLQAEAEEAARLQAEAE. The disordered stretch occupies residues 1-53; sequence EAEEAARLQAEAEEAARQQAEAEEAARLQAEAEEAARLQAEAEEAARLQAEAE.

It is found in the membrane. The protein is Membrane antigen containing repeating peptides of Leishmania major.